The primary structure comprises 64 residues: Protein DsrB (64 aa).

This sequence belongs to the DsrB family.

This is Protein DsrB from Salmonella enteritidis PT4 (strain P125109).